A 713-amino-acid chain; its full sequence is Forkhead box protein P2 (713 aa).

Polar residues predominate over residues 1–28; that stretch reads MMQESATETISNSSMNQNGMSTLSSQLD. 2 disordered regions span residues 1-45 and 279-337; these read MMQE…SEVS and DNGI…TGAS. Over residues 290 to 303 the composition is skewed to low complexity; it reads TTNNSSSTTSSTTS. Positions 313–322 are enriched in polar residues; it reads SIVNGQSSVL. Positions 324–335 are enriched in basic and acidic residues; the sequence is ARRDSSSHEETG. The C2H2-type zinc finger occupies 344-369; the sequence is GVCKWPGCESICEDFGQFLKHLNNEH. The tract at residues 386–407 is leucine-zipper; sequence VQQLEIQLSKERERLQAMMTHL. Residues 420–424 form a CTBP1-binding region; the sequence is PLNLV. The span at 436–457 shows a compositional bias: low complexity; sequence TSPQSLPQTPTTPTAPVTPITQ. The interval 436-463 is disordered; that stretch reads TSPQSLPQTPTTPTAPVTPITQGPSVIT. A DNA-binding region (fork-head) is located at residues 502–592; that stretch reads RPPFTYATLI…SQKITGSPTL (91 aa). 2 disordered regions span residues 647–666 and 676–713; these read LDHI…QPHI and VIAE…EDLE. The segment covering 697-713 has biased composition (acidic residues); that stretch reads LEDDREIEEEPLSEDLE.

As to quaternary structure, forms homodimers and heterodimers with FOXP1 and FOXP4. Dimerization is required for DNA-binding. Interacts with CTBP1. Interacts with FOXP1. Interacts with TBR1. Interacts with ZMYM2.

It localises to the nucleus. Its function is as follows. Transcriptional repressor that may play a role in the specification and differentiation of lung epithelium. May also play a role in developing neural, gastrointestinal and cardiovascular tissues. Can act with CTBP1 to synergistically repress transcription but CTPBP1 is not essential. Plays a role in synapse formation by regulating SRPX2 levels. The chain is Forkhead box protein P2 (FOXP2) from Hylobates lar (Lar gibbon).